Consider the following 166-residue polypeptide: 2-amino-4-hydroxy-6-hydroxymethyldihydropteridine pyrophosphokinase (166 aa).

It belongs to the HPPK family.

The enzyme catalyses 6-hydroxymethyl-7,8-dihydropterin + ATP = (7,8-dihydropterin-6-yl)methyl diphosphate + AMP + H(+). It participates in cofactor biosynthesis; tetrahydrofolate biosynthesis; 2-amino-4-hydroxy-6-hydroxymethyl-7,8-dihydropteridine diphosphate from 7,8-dihydroneopterin triphosphate: step 4/4. Catalyzes the transfer of pyrophosphate from adenosine triphosphate (ATP) to 6-hydroxymethyl-7,8-dihydropterin, an enzymatic step in folate biosynthesis pathway. This is 2-amino-4-hydroxy-6-hydroxymethyldihydropteridine pyrophosphokinase (folK) from Streptococcus pyogenes serotype M6 (strain ATCC BAA-946 / MGAS10394).